Here is a 184-residue protein sequence, read N- to C-terminus: GTP cyclohydrolase 1 (184 aa).

Positions 75, 78, and 146 each coordinate Zn(2+).

It belongs to the GTP cyclohydrolase I family. As to quaternary structure, homomer.

It carries out the reaction GTP + H2O = 7,8-dihydroneopterin 3'-triphosphate + formate + H(+). The protein operates within cofactor biosynthesis; 7,8-dihydroneopterin triphosphate biosynthesis; 7,8-dihydroneopterin triphosphate from GTP: step 1/1. In Streptococcus pneumoniae (strain Taiwan19F-14), this protein is GTP cyclohydrolase 1.